A 257-amino-acid chain; its full sequence is Transmembrane protein 101 (257 aa).

8 helical membrane-spanning segments follow: residues 21-40 (VLLT…LYAE), 52-72 (VPYL…MSFG), 77-97 (WFAL…YIGG), 110-130 (YSRT…AGEL), 139-159 (SLQS…AYSL), 182-202 (LFFV…YVTL), 206-226 (ILAV…AYWH), and 233-253 (FWNQ…AVIL).

It is found in the membrane. Its function is as follows. May activate NF-kappa-B signaling pathways. This Pongo abelii (Sumatran orangutan) protein is Transmembrane protein 101 (TMEM101).